The chain runs to 805 residues: Leucine--tRNA ligase (805 aa).

Positions 40-51 (PYPSGQGLHVGH) match the 'HIGH' region motif. The 'KMSKS' region motif lies at 577–581 (KMSKS). Lys580 is a binding site for ATP.

The protein belongs to the class-I aminoacyl-tRNA synthetase family.

Its subcellular location is the cytoplasm. It carries out the reaction tRNA(Leu) + L-leucine + ATP = L-leucyl-tRNA(Leu) + AMP + diphosphate. The polypeptide is Leucine--tRNA ligase (Pediococcus pentosaceus (strain ATCC 25745 / CCUG 21536 / LMG 10740 / 183-1w)).